Here is a 212-residue protein sequence, read N- to C-terminus: Methylthioribulose-1-phosphate dehydratase (212 aa).

Zn(2+) is bound by residues H97 and H99.

The protein belongs to the aldolase class II family. MtnB subfamily. Homotetramer. Zn(2+) is required as a cofactor.

The enzyme catalyses 5-(methylsulfanyl)-D-ribulose 1-phosphate = 5-methylsulfanyl-2,3-dioxopentyl phosphate + H2O. It functions in the pathway amino-acid biosynthesis; L-methionine biosynthesis via salvage pathway; L-methionine from S-methyl-5-thio-alpha-D-ribose 1-phosphate: step 2/6. In terms of biological role, catalyzes the dehydration of methylthioribulose-1-phosphate (MTRu-1-P) into 2,3-diketo-5-methylthiopentyl-1-phosphate (DK-MTP-1-P). This chain is Methylthioribulose-1-phosphate dehydratase, found in Bacillus cytotoxicus (strain DSM 22905 / CIP 110041 / 391-98 / NVH 391-98).